Consider the following 196-residue polypeptide: dITP/XTP pyrophosphatase (196 aa).

Substrate is bound at residue threonine 7–lysine 12. Aspartate 40 and aspartate 69 together coordinate Mg(2+). The active-site Proton acceptor is aspartate 69. Substrate contacts are provided by residues serine 70, phenylalanine 150–aspartate 153, lysine 173, and histidine 178–arginine 179.

The protein belongs to the HAM1 NTPase family. In terms of assembly, homodimer. It depends on Mg(2+) as a cofactor.

It carries out the reaction XTP + H2O = XMP + diphosphate + H(+). The enzyme catalyses dITP + H2O = dIMP + diphosphate + H(+). It catalyses the reaction ITP + H2O = IMP + diphosphate + H(+). Its function is as follows. Pyrophosphatase that catalyzes the hydrolysis of nucleoside triphosphates to their monophosphate derivatives, with a high preference for the non-canonical purine nucleotides XTP (xanthosine triphosphate), dITP (deoxyinosine triphosphate) and ITP. Seems to function as a house-cleaning enzyme that removes non-canonical purine nucleotides from the nucleotide pool, thus preventing their incorporation into DNA/RNA and avoiding chromosomal lesions. This chain is dITP/XTP pyrophosphatase, found in Exiguobacterium sp. (strain ATCC BAA-1283 / AT1b).